The primary structure comprises 463 residues: Glutamate--tRNA ligase 2 (463 aa).

A 'HIGH' region motif is present at residues 11-21 (PSPTGYLHIGG). Positions 240-244 (KLSKR) match the 'KMSKS' region motif. Lysine 243 provides a ligand contact to ATP.

It belongs to the class-I aminoacyl-tRNA synthetase family. Glutamate--tRNA ligase type 1 subfamily. As to quaternary structure, monomer.

It is found in the cytoplasm. It carries out the reaction tRNA(Glu) + L-glutamate + ATP = L-glutamyl-tRNA(Glu) + AMP + diphosphate. Functionally, catalyzes the attachment of glutamate to tRNA(Glu) in a two-step reaction: glutamate is first activated by ATP to form Glu-AMP and then transferred to the acceptor end of tRNA(Glu). This chain is Glutamate--tRNA ligase 2, found in Campylobacter jejuni subsp. jejuni serotype O:6 (strain 81116 / NCTC 11828).